The primary structure comprises 173 residues: Thaumatin-like protein PWIR2 (173 aa).

A signal peptide spans 1–20; that stretch reads MATSPVLFLLLAVFAAGASA.

Belongs to the thaumatin family.

The polypeptide is Thaumatin-like protein PWIR2 (Triticum aestivum (Wheat)).